The following is a 454-amino-acid chain: Cathepsin C (454 aa).

The N-terminal stretch at 1–20 is a signal peptide; the sequence is MHWVFHCILIILACLRFTCA. A propeptide spanning residues 21–217 is cleaved from the precursor; sequence DTPANCTYED…SKELISLTGN (197 aa). Asparagine 25 carries N-linked (GlcNAc...) asparagine glycosylation. 3 disulfides stabilise this stretch: cysteine 26–cysteine 107, cysteine 244–cysteine 287, and cysteine 280–cysteine 321. Residue cysteine 247 is part of the active site. Residue asparagine 265 is glycosylated (N-linked (GlcNAc...) asparagine). Phenylalanine 291 is a chloride binding site. Asparagine 326 is a glycosylation site (N-linked (GlcNAc...) asparagine). Tyrosine 337 provides a ligand contact to chloride. Residues histidine 398 and asparagine 420 contribute to the active site.

It belongs to the peptidase C1 family. Chloride is required as a cofactor.

Its subcellular location is the lysosome. In terms of biological role, thiol protease. Has a role as a digestive enzyme. This chain is Cathepsin C, found in Schistosoma mansoni (Blood fluke).